Consider the following 332-residue polypeptide: Ornithine carbamoyltransferase, catabolic (332 aa).

Carbamoyl phosphate-binding positions include 60-63 (STRT), glutamine 87, arginine 111, and 138-141 (HPTQ). L-ornithine-binding positions include asparagine 170, aspartate 230, and 234-235 (SM). Carbamoyl phosphate-binding positions include 271 to 272 (CL) and arginine 316.

This sequence belongs to the aspartate/ornithine carbamoyltransferase superfamily. OTCase family.

The protein resides in the cytoplasm. It catalyses the reaction carbamoyl phosphate + L-ornithine = L-citrulline + phosphate + H(+). The protein operates within amino-acid degradation; L-arginine degradation via ADI pathway; carbamoyl phosphate from L-arginine: step 2/2. In terms of biological role, reversibly catalyzes the transfer of the carbamoyl group from carbamoyl phosphate (CP) to the N(epsilon) atom of ornithine (ORN) to produce L-citrulline. The chain is Ornithine carbamoyltransferase, catabolic from Bacillus cereus (strain ATCC 10987 / NRS 248).